Reading from the N-terminus, the 402-residue chain is Putative PDZ domain-containing protein PDZK1P1 (402 aa).

PDZ domains lie at 12–93 (RLCY…VDKE) and 121–206 (IVEM…VDKE). The disordered stretch occupies residues 230 to 258 (GSVKEAPAPTPTSLEVSSPPDTTEEEDHK). Polar residues predominate over residues 240–250 (PTSLEVSSPPD). The 81-residue stretch at 261 to 341 (LCRLAKGENG…NVTLLVCGKK (81 aa)) folds into the PDZ 3 domain. The segment at 362 to 402 (DTPPDSKEGIVVESKHDSHMAKERAHSTASHSSSNSEDTEM) is disordered. Basic and acidic residues predominate over residues 365 to 387 (PDSKEGIVVESKHDSHMAKERAH). Low complexity predominate over residues 388–402 (STASHSSSNSEDTEM).

It belongs to the NHER family.

The protein is Putative PDZ domain-containing protein PDZK1P1 of Homo sapiens (Human).